The following is a 112-amino-acid chain: UPF0060 membrane protein AAur_4166 (112 aa).

Transmembrane regions (helical) follow at residues 8–28 (ILFV…WQAV), 33–53 (AWWW…FAAF), 62–82 (VLAA…MLMD), and 91–111 (VIGA…PRPG).

It belongs to the UPF0060 family.

The protein localises to the cell membrane. The sequence is that of UPF0060 membrane protein AAur_4166 from Paenarthrobacter aurescens (strain TC1).